Reading from the N-terminus, the 61-residue chain is Large ribosomal subunit protein bL32 (61 aa).

Residues 1 to 44 are disordered; it reads MAVQQNRKSRSRRDMRRSHDALTENALTVDQATGETHRRHHVTK. The segment covering 7–16 has biased composition (basic residues); it reads RKSRSRRDMR. The span at 25–34 shows a compositional bias: polar residues; the sequence is NALTVDQATG.

It belongs to the bacterial ribosomal protein bL32 family.

This is Large ribosomal subunit protein bL32 from Acinetobacter baumannii (strain AB307-0294).